The following is a 1171-amino-acid chain: ATP-dependent helicase/deoxyribonuclease subunit B (1171 aa).

In terms of domain architecture, UvrD-like helicase ATP-binding spans 1–343; it reads MSLRFVIGRA…LVADENYRYR (343 aa). Residue 8–15 coordinates ATP; the sequence is GRAGSGKS. Residues 281–587 form the UvrD-like helicase C-terminal domain; it reads MEQPRFHSPA…QFANIPPSLD (307 aa). [4Fe-4S] cluster-binding residues include C805, C1129, C1132, and C1138.

Belongs to the helicase family. AddB/RexB type 1 subfamily. Heterodimer of AddA and AddB. The cofactor is Mg(2+). It depends on [4Fe-4S] cluster as a cofactor.

Its function is as follows. The heterodimer acts as both an ATP-dependent DNA helicase and an ATP-dependent, dual-direction single-stranded exonuclease. Recognizes the chi site generating a DNA molecule suitable for the initiation of homologous recombination. The AddB subunit has 5' -&gt; 3' nuclease activity but not helicase activity. This chain is ATP-dependent helicase/deoxyribonuclease subunit B, found in Bacillus cereus (strain AH187).